A 460-amino-acid polypeptide reads, in one-letter code: N-myc proto-oncogene protein (460 aa).

Residues 19 to 47 form an interaction with AURKA region; that stretch reads LEFDSLQPCFYPDEDDFYFGGPDSTPPGE. Residues 61 to 90 are interaction with AURKA and FBXW7; that stretch reads LSPSRAFSEQSPEPSDWATEMLLPEADLWG. Positions 76 to 85 match the 9aaTAD motif; it reads DWATEMLLPE. 3 disordered regions span residues 131-169, 221-288, and 330-388; these read VSEK…GAGR, AAAP…SNSK, and APSP…LERQ. A compositionally biased stretch (low complexity) spans 138 to 158; the sequence is GRGPPAAGPATPGAGAANPAG. The segment covering 159–169 has biased composition (gly residues); sequence RGHGGTAGAGR. Positions 221 to 233 are enriched in low complexity; sequence AAAPASAAVAAPP. A compositionally biased stretch (acidic residues) spans 255-274; the sequence is TLSDSDDEDDEEEDEEEEID. 2 positions are modified to phosphoserine; by CK2: Ser257 and Ser259. A bHLH domain is found at 377–429; it reads ERRRNHNILERQRRNDLRSSFLTLRDHVPELVKNEKAAKVVILKKATEYVHSL. The tract at residues 429-450 is leucine-zipper; sequence LQAEEHQLLLEKEKLQARQQQL.

In terms of assembly, efficient DNA binding requires dimerization with another bHLH protein. Binds DNA as a heterodimer with MAX. Interacts with KDM5A, KDM5B and HUWE1. Interacts with MYCNOS. Interacts with AURKA; interaction is phospho-independent and triggers AURKA activation; AURKA competes with FBXW7 for binding to unphosphorylated MYCN but not for binding to unphosphorylated MYCN. Interacts with FBXW7; FBXW7 competes with AURKA for binding to unphosphorylated MYCN but not for binding to phosphorylated MYCN. Post-translationally, phosphorylated by GSK3-beta which may promote its degradation. Phosphorylated by AURKA.

Its subcellular location is the nucleus. Its function is as follows. Positively regulates the transcription of MYCNOS in neuroblastoma cells. This Marmota monax (Woodchuck) protein is N-myc proto-oncogene protein (MYCN).